The sequence spans 441 residues: Glutamyl-tRNA reductase (441 aa).

Substrate-binding positions include Thr-64–Arg-67, Ser-123, Glu-128–Gln-130, and Gln-134. Cys-65 (nucleophile) is an active-site residue. Residue Gly-203–Ile-208 participates in NADP(+) binding.

This sequence belongs to the glutamyl-tRNA reductase family. In terms of assembly, homodimer.

It carries out the reaction (S)-4-amino-5-oxopentanoate + tRNA(Glu) + NADP(+) = L-glutamyl-tRNA(Glu) + NADPH + H(+). It participates in porphyrin-containing compound metabolism; protoporphyrin-IX biosynthesis; 5-aminolevulinate from L-glutamyl-tRNA(Glu): step 1/2. Functionally, catalyzes the NADPH-dependent reduction of glutamyl-tRNA(Glu) to glutamate 1-semialdehyde (GSA). This chain is Glutamyl-tRNA reductase, found in Burkholderia pseudomallei (strain K96243).